The sequence spans 507 residues: ATP synthase subunit alpha, chloroplastic (507 aa).

Residue 170 to 177 (IGDRQTGK) participates in ATP binding.

This sequence belongs to the ATPase alpha/beta chains family. F-type ATPases have 2 components, CF(1) - the catalytic core - and CF(0) - the membrane proton channel. CF(1) has five subunits: alpha(3), beta(3), gamma(1), delta(1), epsilon(1). CF(0) has four main subunits: a, b, b' and c.

The protein resides in the plastid. The protein localises to the chloroplast thylakoid membrane. The catalysed reaction is ATP + H2O + 4 H(+)(in) = ADP + phosphate + 5 H(+)(out). Functionally, produces ATP from ADP in the presence of a proton gradient across the membrane. The alpha chain is a regulatory subunit. The polypeptide is ATP synthase subunit alpha, chloroplastic (Adiantum capillus-veneris (Maidenhair fern)).